A 267-amino-acid polypeptide reads, in one-letter code: Membrane-spanning 4-domains subfamily A member 10 (267 aa).

Topologically, residues 1 to 56 are cytoplasmic; sequence MAGQAPTAVPGSVTGEVSRWQNLGPAQPAQKVAQPQNLVPDGHLEKALEGSDLLQK. Residues 57-77 traverse the membrane as a helical segment; the sequence is LGGFHIAIAFAHLAFGGYLIS. Over 78–83 the chain is Extracellular; it reads TVKNLH. Residues 84 to 104 traverse the membrane as a helical segment; that stretch reads LVVLKCWYPLWGTVSFLVAGM. Residues 105-118 are Cytoplasmic-facing; the sequence is AAMTTVTFPKTSLK. A helical transmembrane segment spans residues 119 to 139; it reads VLCVIANVISLFCALAGFFVI. The Extracellular portion of the chain corresponds to 140–168; it reads AKDLFLEGPFPWPIWRPYPEPTTYIQRLE. The chain crosses the membrane as a helical span at residues 169-189; that stretch reads LTLFCFTFLEIFLSGSTAITA. Residues 190 to 267 are Cytoplasmic-facing; sequence YRMKRLQAED…LHTGPRTLRK (78 aa).

This sequence belongs to the MS4A family. As to expression, expressed in thymus, kidney, colon, brain and testis. Expressed also by various hematopoietic and lymphoblastoid cell lines.

Its subcellular location is the membrane. Its function is as follows. May be involved in signal transduction as a component of a multimeric receptor complex. The sequence is that of Membrane-spanning 4-domains subfamily A member 10 (Ms4a10) from Mus musculus (Mouse).